Consider the following 66-residue polypeptide: MAKGKDIRIIVILECTCCVRKGVNKELLGISRYITQKNRHNTPNRLEFRKFCRYCQKYTIHGEIKK.

The protein belongs to the bacterial ribosomal protein bL33 family.

It is found in the plastid. Its subcellular location is the chloroplast. This chain is Large ribosomal subunit protein bL33c, found in Phalaenopsis aphrodite subsp. formosana (Moth orchid).